The chain runs to 135 residues: CTP pyrophosphohydrolase (135 aa).

Positions 2–127 (KMIEVVAAII…DIPLLEAFMA (126 aa)) constitute a Nudix hydrolase domain. Substrate contacts are provided by residues 34–39 (FAGGKV), arginine 72, and aspartate 118. Residues 37–58 (GKVEPDESQRQALVRELREELG) carry the Nudix box motif.

It belongs to the Nudix hydrolase family. In terms of assembly, monomer. The cofactor is Mg(2+). It depends on Mn(2+) as a cofactor.

The enzyme catalyses CTP + H2O = CMP + diphosphate + H(+). It carries out the reaction dCTP + H2O = dCMP + diphosphate + H(+). In terms of biological role, hydrolase with a preference for pyrimidine substrates. Has high activity with 5-methyl-dCTP, and much lower activity with CTP, dCTP, 5-hydroxy-dCTP, 2-hydroxy-dATP and 8-hydroxy-dGTP. The chain is CTP pyrophosphohydrolase (nudG) from Escherichia coli (strain K12).